A 325-amino-acid polypeptide reads, in one-letter code: GMP reductase (325 aa).

Catalysis depends on Cys173, which acts as the Thioimidate intermediate. 202–225 (IIADGGIRSHGDIAKSVRFGATMV) is a binding site for NADP(+).

It belongs to the IMPDH/GMPR family. GuaC type 2 subfamily.

The catalysed reaction is IMP + NH4(+) + NADP(+) = GMP + NADPH + 2 H(+). Its function is as follows. Catalyzes the irreversible NADPH-dependent deamination of GMP to IMP. It functions in the conversion of nucleobase, nucleoside and nucleotide derivatives of G to A nucleotides, and in maintaining the intracellular balance of A and G nucleotides. This chain is GMP reductase, found in Delftia acidovorans (strain DSM 14801 / SPH-1).